The chain runs to 686 residues: MGPRSRERRAGAVQNTNDSSALSKRSLAARGYVQDPFAALLVPGAARRAPLIHRGYYVRARAVRHCVRAFLEQIGAPQAALRAQILSLGAGFDSLYFRLKTAGRLARAAVWEVDFPDVARRKAERIGETPELCALTGPFERGEPASALCFESADYCILGLDLRQLQRVEEALGAAGLDAASPTLLLAEAVLTYLEPESAAALIAWAAQRFPNALFVVYEQMRPQDAFGQFMLQHFRQLNSPLHGLERFPDVEAQRRRFLQAGWTACGAVDMNEFYHCFLPAEERRRVENIEPFDEFEEWHLKCAHYFILAASRGDTLSHTLVFPSSEAFPRVNPASPSGVFPASVVSSEGQVPNLKRYGHASVFLSPDVILSAGGFGEQEGRHCRVSQFHLLSRDCDSEWKGSQIGSCGTGVQWDGRLYHTMTRLSESRVLVLGGRLSPVSPALGVLQLHFFKSEDNNTEDLKVTITKAGRKDDSTLCCWRHSTTEVSCQNQEYLFVYGGRSVVEPVLSDWHFLHVGTMAWVRIPVEGEVPEARHSHSACTWQGGALIAGGLGASEEPLNSVLFLRPISCGFLWESVDIQPPITPRYSHTAHVLNGKLLLVGGIWIHSSSFPGVTVINLTTGLSSEYQIDTTYVPWPLMLHNHTSILLPEEQQLLLLGGGGNCFSFGTYFNPHTVTLDLSSLSAGQ.

The span at 1-10 (MGPRSRERRA) shows a compositional bias: basic and acidic residues. The disordered stretch occupies residues 1–21 (MGPRSRERRAGAVQNTNDSSA). S-adenosyl-L-methionine-binding positions include Arg-59, Gly-89, Asp-114, 161–162 (DL), and Glu-188.

The protein belongs to the methyltransferase superfamily. LCMT family. As to quaternary structure, interacts with RNF144B/IBRDC2.

It catalyses the reaction 7-[(3S)-3-amino-3-carboxypropyl]wyosine(37) in tRNA(Phe) + S-adenosyl-L-methionine = 7-[(3S)-(3-amino-3-methoxycarbonyl)propyl]wyosine(37) in tRNA(Phe) + S-adenosyl-L-homocysteine. It carries out the reaction 7-[(3S)-(3-amino-3-methoxycarbonyl)propyl]wyosine(37) in tRNA(Phe) + S-adenosyl-L-methionine + CO2 = wybutosine(37) in tRNA(Phe) + S-adenosyl-L-homocysteine + 2 H(+). It participates in tRNA modification; wybutosine-tRNA(Phe) biosynthesis. In terms of biological role, probable S-adenosyl-L-methionine-dependent methyltransferase that acts as a component of the wybutosine biosynthesis pathway. Wybutosine is a hyper modified guanosine with a tricyclic base found at the 3'-position adjacent to the anticodon of eukaryotic phenylalanine tRNA. May methylate the carboxyl group of leucine residues to form alpha-leucine ester residues. The sequence is that of tRNA wybutosine-synthesizing protein 4 (LCMT2) from Homo sapiens (Human).